A 243-amino-acid chain; its full sequence is Fibroblast growth factor 12 (243 aa).

2 disordered regions span residues 1-39 and 216-243; these read MAAA…DGRS and IGEK…QDST. The Bipartite nuclear localization signal motif lies at 11-38; sequence RQKRQARESNSDRVSASKRRSSPSKDGR.

Belongs to the heparin-binding growth factors family. As to quaternary structure, interacts with the C-terminal region of SCN9A. As to expression, brain, eye and testis; highly expressed in embryonic retina, olfactory epithelium, olfactory bulb, and in a segmental pattern of the body wall; in adult olfactory bulb, less in cerebellum, deep cerebellar nuclei, cortex and multiple midbrain structures.

The protein resides in the nucleus. Its function is as follows. Involved in nervous system development and function. Involved in the positive regulation of voltage-gated sodium channel activity. Promotes neuronal excitability by elevating the voltage dependence of neuronal sodium channel SCN8A fast inactivation. The protein is Fibroblast growth factor 12 (FGF12) of Homo sapiens (Human).